Consider the following 387-residue polypeptide: Galactokinase (387 aa).

Residue 33 to 36 (EHTD) coordinates substrate. ATP-binding positions include S67 and 124–130 (GSGLSSS). The Mg(2+) site is built by S130 and E162. D174 functions as the Proton acceptor in the catalytic mechanism. A substrate-binding site is contributed by Y224.

The protein belongs to the GHMP kinase family. GalK subfamily.

The protein localises to the cytoplasm. The catalysed reaction is alpha-D-galactose + ATP = alpha-D-galactose 1-phosphate + ADP + H(+). It participates in carbohydrate metabolism; galactose metabolism. In terms of biological role, catalyzes the transfer of the gamma-phosphate of ATP to D-galactose to form alpha-D-galactose-1-phosphate (Gal-1-P). The protein is Galactokinase of Ligilactobacillus salivarius (strain UCC118) (Lactobacillus salivarius).